The sequence spans 276 residues: Glutamate racemase (276 aa).

Residues 10–11 (DS) and 42–43 (YG) contribute to the substrate site. The Proton donor/acceptor role is filled by cysteine 73. Substrate is bound at residue 74-75 (NS). The active-site Proton donor/acceptor is the cysteine 183. A substrate-binding site is contributed by 184-185 (TH).

Belongs to the aspartate/glutamate racemases family.

The catalysed reaction is L-glutamate = D-glutamate. It functions in the pathway cell wall biogenesis; peptidoglycan biosynthesis. Its function is as follows. Provides the (R)-glutamate required for cell wall biosynthesis. The chain is Glutamate racemase from Parafrankia sp. (strain EAN1pec).